We begin with the raw amino-acid sequence, 176 residues long: Transmembrane protein 238 (176 aa).

Positions 1-22 (MAAAPAVCASQGSPPGAPSAPA) are disordered. The Cytoplasmic portion of the chain corresponds to 1 to 36 (MAAAPAVCASQGSPPGAPSAPAAAPAPAAGLGRCRM). Residues 9 to 22 (ASQGSPPGAPSAPA) are compositionally biased toward low complexity. Residues 37-57 (ALLLAVALDVAGMAALLTGVF) traverse the membrane as a helical segment. The Extracellular segment spans residues 58 to 69 (AQLQVRGRDFGD). The chain crosses the membrane as a helical span at residues 70-90 (LLIYSGALLVFLSLLGWILWY). The Cytoplasmic segment spans residues 91–176 (TGNIEISRQE…GPGAAGAGSE (86 aa)). Positions 124–137 (SAPAAAGQRPAPGS) are enriched in low complexity. The disordered stretch occupies residues 124-157 (SAPAAAGQRPAPGSRRARRAARAPPPPAAGSRRV). S175 bears the Phosphoserine mark.

The protein resides in the membrane. The sequence is that of Transmembrane protein 238 (TMEM238) from Homo sapiens (Human).